Reading from the N-terminus, the 105-residue chain is Protein SMALL AUXIN UP-REGULATED RNA 16 (105 aa).

Belongs to the ARG7 family. As to expression, expressed in etiolated hypocotyls, cotyledons, leaves, flowers and siliques.

It localises to the cell membrane. Its function is as follows. Provide a mechanistic link between auxin and plasma membrane H(+)-ATPases (PM H(+)-ATPases, e.g. AHA1 and AHA2), and triggers PM H(+)-ATPases activity by promoting phosphorylation of their C-terminal autoinhibitory domain as a result of PP2C-D subfamily of type 2C phosphatases inhibition, thus leading to the acidification of the apoplast and the facilitation of solutes and water uptake to drive cell expansion. Triggers plant growth probably by promoting cell elongation. Regulates branch angles and bending. The sequence is that of Protein SMALL AUXIN UP-REGULATED RNA 16 from Arabidopsis thaliana (Mouse-ear cress).